The primary structure comprises 501 residues: Cytochrome P450 monooxygenase notH (501 aa).

Residues 11–31 (LGLESVGWVLGLLTTSILYLF) traverse the membrane as a helical segment. N-linked (GlcNAc...) asparagine glycosylation occurs at N298. C442 provides a ligand contact to heme.

Belongs to the cytochrome P450 family. The cofactor is heme.

Its subcellular location is the membrane. The protein operates within alkaloid biosynthesis. In terms of biological role, cytochrome P450 monooxygenase; part of the gene cluster that mediates the biosynthesis of notoamide, a fungal indole alkaloid that belongs to a family of natural products containing a characteristic bicyclo[2.2.2]diazaoctane core. The first step of notoamide biosynthesis involves coupling of L-proline and L-tryptophan by the bimodular NRPS notE, to produce cyclo-L-tryptophan-L-proline called brevianamide F. The reverse prenyltransferase notF then acts as a deoxybrevianamide E synthase and converts brevianamide F to deoxybrevianamide E via reverse prenylation at C-2 of the indole ring leading to the bicyclo[2.2.2]diazaoctane core. Deoxybrevianamide E is further hydroxylated at C-6 of the indole ring, likely catalyzed by the cytochrome P450 monooxygenase notG, to yield 6-hydroxy-deoxybrevianamide E. 6-hydroxy-deoxybrevianamide E is a specific substrate of the prenyltransferase notC for normal prenylation at C-7 to produce 6-hydroxy-7-prenyl-deoxybrevianamide, also called notoamide S. As the proposed pivotal branching point in notoamide biosynthesis, notoamide S can be diverted to notoamide E through an oxidative pyran ring closure putatively catalyzed by either notH cytochrome P450 monooxygenase or the notD FAD-linked oxidoreductase. This step would be followed by an indole 2,3-epoxidation-initiated pinacol-like rearrangement catalyzed by the notB FAD-dependent monooxygenase leading to the formation of notoamide C and notoamide D. On the other hand notoamide S is converted to notoamide T by notH (or notD), a bifunctional oxidase that also functions as the intramolecular Diels-Alderase responsible for generation of (+)-notoamide T. To generate antipodal (-)-notoaminide T, notH' (or notD') in Aspergillus versicolor is expected to catalyze a Diels-Alder reaction leading to the opposite stereochemistry. The remaining oxidoreductase notD (or notH) likely catalyzes the oxidative pyran ring formation to yield (+)-stephacidin A. The FAD-dependent monooxygenase notI is highly similar to notB and is predicted to catalyze a similar conversion from (+)-stephacidin A to (-)-notoamide B via the 2,3-epoxidation of (+)-stephacidin A followed by a pinacol-type rearrangement. Finally, it remains unclear which enzyme could be responsible for the final hydroxylation steps leading to notoamide A and sclerotiamide. The polypeptide is Cytochrome P450 monooxygenase notH (Aspergillus sp. (strain MF297-2)).